The chain runs to 274 residues: Large ribosomal subunit protein uL2cz/uL2cy (274 aa).

2 disordered regions span residues 1 to 21 (MAIH…VDSQ) and 225 to 274 (PVDH…RRSK).

The protein belongs to the universal ribosomal protein uL2 family. As to quaternary structure, part of the 50S ribosomal subunit.

It localises to the plastid. The protein localises to the chloroplast. The sequence is that of Large ribosomal subunit protein uL2cz/uL2cy (rpl2-A) from Gossypium barbadense (Sea Island cotton).